The sequence spans 402 residues: UDP-glucose 6-dehydrogenase (402 aa).

Residues 2–19 (KIAV…GVLL), Val-11, Asp-29, Lys-34, Thr-83, Thr-118, and Glu-145 contribute to the NAD(+) site. Substrate contacts are provided by residues 141-145 (EFLRE), Lys-204, Asn-208, 249-253 (YNNPS), and Gly-257. Tyr-259 is an NAD(+) binding site. Cys-260 serves as the catalytic Nucleophile. Lys-263 is an NAD(+) binding site. Lys-320 lines the substrate pocket. NAD(+) is bound at residue Arg-327.

The protein belongs to the UDP-glucose/GDP-mannose dehydrogenase family.

It carries out the reaction UDP-alpha-D-glucose + 2 NAD(+) + H2O = UDP-alpha-D-glucuronate + 2 NADH + 3 H(+). The protein operates within nucleotide-sugar biosynthesis; UDP-alpha-D-glucuronate biosynthesis; UDP-alpha-D-glucuronate from UDP-alpha-D-glucose: step 1/1. Catalyzes the formation of UDP-glucuronic acid which is required for capsular hyaluronic acid synthesis. The chain is UDP-glucose 6-dehydrogenase (hasB) from Streptococcus pyogenes serotype M18 (strain MGAS8232).